The following is an 833-amino-acid chain: DNA ligase (833 aa).

NAD(+) contacts are provided by residues aspartate 35–aspartate 39, serine 84–leucine 85, and glutamate 115. Lysine 117 serves as the catalytic N6-AMP-lysine intermediate. NAD(+) is bound by residues arginine 138, glutamate 175, lysine 292, and lysine 316. Zn(2+)-binding residues include cysteine 410, cysteine 413, cysteine 428, and cysteine 434. The 84-residue stretch at valine 750–valine 833 folds into the BRCT domain.

This sequence belongs to the NAD-dependent DNA ligase family. LigA subfamily. It depends on Mg(2+) as a cofactor. The cofactor is Mn(2+).

The catalysed reaction is NAD(+) + (deoxyribonucleotide)n-3'-hydroxyl + 5'-phospho-(deoxyribonucleotide)m = (deoxyribonucleotide)n+m + AMP + beta-nicotinamide D-nucleotide.. Its function is as follows. DNA ligase that catalyzes the formation of phosphodiester linkages between 5'-phosphoryl and 3'-hydroxyl groups in double-stranded DNA using NAD as a coenzyme and as the energy source for the reaction. It is essential for DNA replication and repair of damaged DNA. This Xanthomonas campestris pv. campestris (strain 8004) protein is DNA ligase.